The following is a 553-amino-acid chain: Dihydroxy-acid dehydratase (553 aa).

Mg(2+) is bound at residue aspartate 78. Cysteine 119 is a binding site for [2Fe-2S] cluster. The Mg(2+) site is built by aspartate 120 and lysine 121. N6-carboxylysine is present on lysine 121. Cysteine 193 lines the [2Fe-2S] cluster pocket. Position 441 (glutamate 441) interacts with Mg(2+). Serine 467 acts as the Proton acceptor in catalysis.

It belongs to the IlvD/Edd family. As to quaternary structure, homodimer. [2Fe-2S] cluster serves as cofactor. It depends on Mg(2+) as a cofactor.

It carries out the reaction (2R)-2,3-dihydroxy-3-methylbutanoate = 3-methyl-2-oxobutanoate + H2O. The catalysed reaction is (2R,3R)-2,3-dihydroxy-3-methylpentanoate = (S)-3-methyl-2-oxopentanoate + H2O. It participates in amino-acid biosynthesis; L-isoleucine biosynthesis; L-isoleucine from 2-oxobutanoate: step 3/4. It functions in the pathway amino-acid biosynthesis; L-valine biosynthesis; L-valine from pyruvate: step 3/4. Functions in the biosynthesis of branched-chain amino acids. Catalyzes the dehydration of (2R,3R)-2,3-dihydroxy-3-methylpentanoate (2,3-dihydroxy-3-methylvalerate) into 2-oxo-3-methylpentanoate (2-oxo-3-methylvalerate) and of (2R)-2,3-dihydroxy-3-methylbutanoate (2,3-dihydroxyisovalerate) into 2-oxo-3-methylbutanoate (2-oxoisovalerate), the penultimate precursor to L-isoleucine and L-valine, respectively. This is Dihydroxy-acid dehydratase from Pelobacter propionicus (strain DSM 2379 / NBRC 103807 / OttBd1).